Consider the following 264-residue polypeptide: Putative [LysW]-aminoadipate/[LysW]-glutamate kinase (264 aa).

Substrate contacts are provided by residues 34 to 35 (GG), Arg61, and Asn169.

Belongs to the acetylglutamate kinase family. LysZ subfamily.

It localises to the cytoplasm. The catalysed reaction is [amino-group carrier protein]-C-terminal-N-(1,4-dicarboxybutan-1-yl)-L-glutamine + ATP = [amino-group carrier protein]-C-terminal-N-(1-carboxy-5-phosphooxy-5-oxopentan-1-yl)-L-glutamine + ADP. The enzyme catalyses [amino-group carrier protein]-C-terminal-gamma-(L-glutamyl)-L-glutamate + ATP = [amino-group carrier protein]-C-terminal-gamma-(5-phospho-L-glutamyl)-L-glutamate + ADP. It participates in amino-acid biosynthesis; L-lysine biosynthesis via AAA pathway; L-lysine from L-alpha-aminoadipate (Thermus route): step 2/5. The protein operates within amino-acid biosynthesis; L-arginine biosynthesis. In terms of biological role, involved in both the arginine and lysine biosynthetic pathways. Phosphorylates the LysW-bound precursors glutamate (for arginine biosynthesis), respectively alpha-aminoadipate (for lysine biosynthesis). The sequence is that of Putative [LysW]-aminoadipate/[LysW]-glutamate kinase from Ignicoccus hospitalis (strain KIN4/I / DSM 18386 / JCM 14125).